The chain runs to 240 residues: Protein unc-119 homolog A (240 aa).

Residues 1 to 12 show a composition bias toward gly residues; that stretch reads MKVKKGGGGTGS. A disordered region spans residues 1-62; it reads MKVKKGGGGT…PLQGKQPIGP (62 aa). 3 positions are modified to phosphoserine; by CK2: serine 37, serine 39, and serine 41. Position 131 (tyrosine 131) interacts with tetradecanoate.

The protein belongs to the PDE6D/unc-119 family. May interact with GTP-bound ARL1. Interacts with ARL2 and ARL3 (GTP-bound forms); this promotes the release of myristoylated cargo proteins. Found in a complex with ARL3, RP2 and UNC119; RP2 induces hydrolysis of GTP ARL3 in the complex, leading to the release of UNC119. Interacts with NPHP3 (when myristoylated). Interacts with CYS1 (when myristoylated). Interacts with MACIR; interaction only takes place when UNC119 is not liganded with myristoylated proteins. Interacts with CABP4; in the absence of calcium. Interacts with DNM1; leading to a decrease of DNM1 GTPase activity. Interacts with LCK; this interaction plays a crucial role in activation of LCK. Interacts with FYN. Interacts with RAB11A; in a cell cycle-dependent manner. Interacts with LYN (via SH2 and SH3 domains); leading to LYN activation. Found in a complex with ABL1, ABL2, CRK and UNC119; leading to the inhibition of CRK phosphorylation by ABL kinases. Interacts with CD44. Interacts with KLHL18 (via kelch repeats). Interacts with PPP3CA, PPP3CB and PPP3CC. Interacts with USP48; this interaction promotes UNC119 stability. Phosphorylation suppresses its interaction with KLHL18 and down-regulates its KLHL18-mediated degradation. Phosphorylated more under light conditions than dark conditions. Dephosphorylated by calcineurin. Localized in photoreceptor synapses in the outer plexiform layer of the retina.

It is found in the cytoplasm. The protein resides in the cytoskeleton. The protein localises to the microtubule organizing center. It localises to the centrosome. Its subcellular location is the spindle. It is found in the spindle pole. Involved in synaptic functions in photoreceptor cells, the signal transduction in immune cells as a Src family kinase activator, endosome recycling, the uptake of bacteria and endocytosis, protein trafficking in sensory neurons and as lipid-binding chaperone with specificity for a diverse subset of myristoylated proteins. Specifically binds the myristoyl moiety of a subset of N-terminally myristoylated proteins and is required for their localization. Binds myristoylated GNAT1 and is required for G-protein localization and trafficking in sensory neurons. Probably plays a role in trafficking proteins in photoreceptor cells. Plays important roles in mediating Src family kinase signals for the completion of cytokinesis via RAB11A. This Mus musculus (Mouse) protein is Protein unc-119 homolog A (Unc119).